The following is a 530-amino-acid chain: MINYKNLNELENFKILEGIAPEVLKTALTGKRIKEYDITIEGDSVHYNYASKQINENHLKIFQNLSDEANLIEKYKEVLNGEKINISENRKVLHHLTRGQIGKDVIEDNKENMREFFQSELEKIYNFAKQVHSGNIKSVNGKKFKNVVQIGIGGSSLGPKALYSSIKNYAKKHNLALMNGYFISNIDPDESEEVLNSINLDETLFIIVSKSGNTLETTANMQFLINKLKSNGIKEYKKQMTIITLKNSMLALEETGCLEYFFMHDSIGGRFSPTSAVGLALLTLCFTEKIVKEIIKGANKTDKKSLNKKVKDNAPLLAALISIYERNVLNYSSNCIIAYSKAMENFYLHLQQLEMESNGKSVNRFNETINYKTVRIIWGGVGTDVQHSFFQMLHQGTDIVPMDFIGFNATQLKEDVISDNSSSNDKLKANLIAQIIAFSKGKENSNKNKNFKGERPSALIYSKELTPYAIGAILSHYENKVMFEGFLLNINSFDQEGVQLGKILANQILKNNAFEDEVIESYSKKILKQD.

The Proton donor role is filled by Glu-356. Active-site residues include His-387 and Lys-502.

Belongs to the GPI family.

The protein resides in the cytoplasm. It carries out the reaction alpha-D-glucose 6-phosphate = beta-D-fructose 6-phosphate. It participates in carbohydrate biosynthesis; gluconeogenesis. It functions in the pathway carbohydrate degradation; glycolysis; D-glyceraldehyde 3-phosphate and glycerone phosphate from D-glucose: step 2/4. Its function is as follows. Catalyzes the reversible isomerization of glucose-6-phosphate to fructose-6-phosphate. The chain is Glucose-6-phosphate isomerase from Borrelia garinii subsp. bavariensis (strain ATCC BAA-2496 / DSM 23469 / PBi) (Borreliella bavariensis).